The chain runs to 643 residues: MSLVMDSLKNLLLSPLRGFIHKDFHDIFERMTLLSKLLFLIVHLVDKLNLWHRLPVLLGLLYLGARRHLHQEYNLINVGKTPIGVRSNPADHPYRTADGKYNDPFNEGAGSELSFFGRNMLPVDQHNQLKKPDPMVVATKLLARRNFVDTGKQFNMIAASWIQFMIHDWIDHLEDTKQIELKAAEEVASQCPLKSFKFFKTKEIPTGFYEIKTGHLNTRTPWWDGSAIYGSNAEVLKKVRTFKDGKLKLSADGLLEIDKNGKIISGDVRNTWAGLSALQALFVQEHNSVCDALKKEYPELEEEDLYRHARLVTSAVIAKVHTIDWTVELLKTDTLLAGMRANWYGLLGKKFKDTFGHVGGSILGGFVGMKKPENYGVPYSLTEEFTSVYRMHQLLPDKLQLRNIDATPGPNKSLPLTNEIPLEDLIGGKGEENLSKIGFTKQMVSMGHQACGALELWNYPVWMRDLIPQDVDGTDRPDHIDLAALEIYRDRERSVARYNEFRRGMLQIPISKWEDLTDDEEVINTLGEVYGDDVEELDLMVGMAAEKKIKGFAISETAFFIFLVMASRRLEADRFFTSNYNEETYTKKGLEWVNTTESLKDVLDRHYPEITEKWMNSSSAFSVWDSTPQPHNPIPLYFRVPPQ.

The Proton acceptor role is filled by His-167. Asp-168 provides a ligand contact to Ca(2+). Heme b is bound at residue His-172. 4 residues coordinate Ca(2+): Thr-220, Trp-222, Asp-224, and Ser-226. Heme b-binding residues include His-392, Arg-489, and Arg-493.

It belongs to the peroxidase family. The cofactor is heme b. Ca(2+) serves as cofactor.

It catalyses the reaction a 1,2-saturated fatty acid + O2 = a (2R)-2-hydroperoxy fatty acid. It carries out the reaction (9Z,12Z,15Z)-octadecatrienoate + O2 = (R)-2-hydroperoxy-(9Z,12Z,15Z)-octadecatrienoate. The catalysed reaction is (9Z,12Z)-octadecadienoate + O2 = (2R,9Z,12Z)-2-hydroperoxyoctadecadienoate. Its function is as follows. Alpha-dioxygenase that catalyzes the primary oxygenation step of a variety of 14-20 carbon fatty acids, containing up to three unsaturated bonds, into their corresponding 2R-hydroperoxides. Involved in the production of oxylipins that function in cell signaling, wound healing, and protection from infection. The chain is Alpha-dioxygenase PIOX from Nicotiana tabacum (Common tobacco).